The following is a 469-amino-acid chain: Ribulose bisphosphate carboxylase large chain (469 aa).

A propeptide spanning residues 1 to 2 (MS) is cleaved from the precursor. P3 bears the N-acetylproline mark. K14 carries the post-translational modification N6,N6,N6-trimethyllysine. Positions 123 and 173 each coordinate substrate. The Proton acceptor role is filled by K175. Residue K177 coordinates substrate. The Mg(2+) site is built by K201, D203, and E204. K201 is subject to N6-carboxylysine. H294 functions as the Proton acceptor in the catalytic mechanism. Residues R295, H327, and S379 each coordinate substrate.

Belongs to the RuBisCO large chain family. Type I subfamily. In terms of assembly, heterohexadecamer of 8 large chains and 8 small chains; disulfide-linked. The disulfide link is formed within the large subunit homodimers. Requires Mg(2+) as cofactor. The disulfide bond which can form in the large chain dimeric partners within the hexadecamer appears to be associated with oxidative stress and protein turnover.

Its subcellular location is the plastid. It is found in the chloroplast. The catalysed reaction is 2 (2R)-3-phosphoglycerate + 2 H(+) = D-ribulose 1,5-bisphosphate + CO2 + H2O. It catalyses the reaction D-ribulose 1,5-bisphosphate + O2 = 2-phosphoglycolate + (2R)-3-phosphoglycerate + 2 H(+). Its function is as follows. RuBisCO catalyzes two reactions: the carboxylation of D-ribulose 1,5-bisphosphate, the primary event in carbon dioxide fixation, as well as the oxidative fragmentation of the pentose substrate in the photorespiration process. Both reactions occur simultaneously and in competition at the same active site. The protein is Ribulose bisphosphate carboxylase large chain of Dianthus caryophyllus (Carnation).